The following is a 307-amino-acid chain: Ribonuclease Z (307 aa).

The Zn(2+) site is built by His-63, His-65, Asp-67, His-68, His-143, Asp-213, and His-271. The active-site Proton acceptor is the Asp-67.

This sequence belongs to the RNase Z family. As to quaternary structure, homodimer. The cofactor is Zn(2+).

It carries out the reaction Endonucleolytic cleavage of RNA, removing extra 3' nucleotides from tRNA precursor, generating 3' termini of tRNAs. A 3'-hydroxy group is left at the tRNA terminus and a 5'-phosphoryl group is left at the trailer molecule.. Zinc phosphodiesterase, which displays some tRNA 3'-processing endonuclease activity. Probably involved in tRNA maturation, by removing a 3'-trailer from precursor tRNA. In Lactococcus lactis subsp. lactis (strain IL1403) (Streptococcus lactis), this protein is Ribonuclease Z.